A 516-amino-acid polypeptide reads, in one-letter code: D-alanine--D-alanyl carrier protein ligase (516 aa).

An ATP-binding site is contributed by 156–157 (TS). Position 203 (aspartate 203) interacts with D-alanine. 298–303 (NAYGPT) serves as a coordination point for ATP. Residue valine 307 participates in D-alanine binding. Residues aspartate 389, 401 to 404 (YGGR), and lysine 503 contribute to the ATP site. Lysine 503 is a D-alanine binding site.

The protein belongs to the ATP-dependent AMP-binding enzyme family. DltA subfamily.

The protein resides in the cytoplasm. The enzyme catalyses holo-[D-alanyl-carrier protein] + D-alanine + ATP = D-alanyl-[D-alanyl-carrier protein] + AMP + diphosphate. The protein operates within cell wall biogenesis; lipoteichoic acid biosynthesis. Functionally, catalyzes the first step in the D-alanylation of lipoteichoic acid (LTA), the activation of D-alanine and its transfer onto the D-alanyl carrier protein (Dcp) DltC. In an ATP-dependent two-step reaction, forms a high energy D-alanyl-AMP intermediate, followed by transfer of the D-alanyl residue as a thiol ester to the phosphopantheinyl prosthetic group of the Dcp. D-alanylation of LTA plays an important role in modulating the properties of the cell wall in Gram-positive bacteria, influencing the net charge of the cell wall. The sequence is that of D-alanine--D-alanyl carrier protein ligase from Streptococcus pneumoniae (strain ATCC 700669 / Spain 23F-1).